The primary structure comprises 510 residues: Lysine--tRNA ligase (510 aa).

Mg(2+) contacts are provided by E420 and E427.

This sequence belongs to the class-II aminoacyl-tRNA synthetase family. As to quaternary structure, homodimer. Mg(2+) serves as cofactor.

It is found in the cytoplasm. It catalyses the reaction tRNA(Lys) + L-lysine + ATP = L-lysyl-tRNA(Lys) + AMP + diphosphate. This Clostridium novyi (strain NT) protein is Lysine--tRNA ligase.